A 252-amino-acid chain; its full sequence is Indole-3-glycerol phosphate synthase (252 aa).

The protein belongs to the TrpC family.

It carries out the reaction 1-(2-carboxyphenylamino)-1-deoxy-D-ribulose 5-phosphate + H(+) = (1S,2R)-1-C-(indol-3-yl)glycerol 3-phosphate + CO2 + H2O. The protein operates within amino-acid biosynthesis; L-tryptophan biosynthesis; L-tryptophan from chorismate: step 4/5. This is Indole-3-glycerol phosphate synthase from Leptospira interrogans serogroup Icterohaemorrhagiae serovar copenhageni (strain Fiocruz L1-130).